Reading from the N-terminus, the 134-residue chain is Aspartate 1-decarboxylase (134 aa).

The active-site Schiff-base intermediate with substrate; via pyruvic acid is the Ser25. Ser25 is subject to Pyruvic acid (Ser). Thr57 contacts substrate. The Proton donor role is filled by Tyr58. Substrate is bound at residue Gly73–Ala75.

Belongs to the PanD family. Heterooctamer of four alpha and four beta subunits. Requires pyruvate as cofactor. Post-translationally, is synthesized initially as an inactive proenzyme, which is activated by self-cleavage at a specific serine bond to produce a beta-subunit with a hydroxyl group at its C-terminus and an alpha-subunit with a pyruvoyl group at its N-terminus.

The protein localises to the cytoplasm. The catalysed reaction is L-aspartate + H(+) = beta-alanine + CO2. Its pathway is cofactor biosynthesis; (R)-pantothenate biosynthesis; beta-alanine from L-aspartate: step 1/1. Its function is as follows. Catalyzes the pyruvoyl-dependent decarboxylation of aspartate to produce beta-alanine. This is Aspartate 1-decarboxylase from Mycolicibacterium gilvum (strain PYR-GCK) (Mycobacterium gilvum (strain PYR-GCK)).